The following is a 727-amino-acid chain: DNA topoisomerase 3 (727 aa).

The Toprim domain occupies 3–136 (KTVVLAEKPS…LKRLWISSVT (134 aa)). Residues E9 and D105 each contribute to the Mg(2+) site. The Topo IA-type catalytic domain occupies 153 to 592 (FENLYHSAVA…EMKEYAKQTI (440 aa)). The tract at residues 187–192 (SCGRVQ) is interaction with DNA. Residue Y310 is the O-(5'-phospho-DNA)-tyrosine intermediate of the active site. The segment covering 685 to 711 (RRAKDKNSKASKRDVHSYMKKQNKDEP) has biased composition (basic and acidic residues). The disordered stretch occupies residues 685-713 (RRAKDKNSKASKRDVHSYMKKQNKDEPIN).

The protein belongs to the type IA topoisomerase family. Requires Mg(2+) as cofactor.

The enzyme catalyses ATP-independent breakage of single-stranded DNA, followed by passage and rejoining.. In terms of biological role, releases the supercoiling and torsional tension of DNA, which is introduced during the DNA replication and transcription, by transiently cleaving and rejoining one strand of the DNA duplex. Introduces a single-strand break via transesterification at a target site in duplex DNA. The scissile phosphodiester is attacked by the catalytic tyrosine of the enzyme, resulting in the formation of a DNA-(5'-phosphotyrosyl)-enzyme intermediate and the expulsion of a 3'-OH DNA strand. The free DNA strand then undergoes passage around the unbroken strand, thus removing DNA supercoils. Finally, in the religation step, the DNA 3'-OH attacks the covalent intermediate to expel the active-site tyrosine and restore the DNA phosphodiester backbone. In Bacillus licheniformis (strain ATCC 14580 / DSM 13 / JCM 2505 / CCUG 7422 / NBRC 12200 / NCIMB 9375 / NCTC 10341 / NRRL NRS-1264 / Gibson 46), this protein is DNA topoisomerase 3.